Consider the following 354-residue polypeptide: MAAGGGRAFAWQVFPPMPTCRVYGTVAHQDGHLLVLGGCGRAGLPLDTAETLDMGSHTWLALAPLPTARAGAAAVVLGKQVLVVGGVDEVQSPVAAVEAFLADEGRWERRATLPQAAMGVATVERDGMVYALGGMGPDTAPQAQVLVYEPRRDCWLSLPSMPTPCYGASTFLHGNKIYVLGGRQGKLPVTAFEAFDLETRTWTRHPSLPSRRAFAGCAMAEGSVFSLGGLQQPGPHNFYSRPHFVNTVEMFDLEHGSWTKLPRSLRMRDKRADFVVGSLGGNIVAIGGLGNQPCPLASVESFSLARRRWEVLPAMPTARCSCSSLQAGPRLFVIGGVAQGPSQAVEALCLRDGV.

Kelch repeat units lie at residues 1-31, 32-79, 81-127, 128-175, 176-222, 224-281, 282-329, and 331-354; these read MAAGGGRAFAWQVFPPMPTCRVYGTVAHQDG, HLLV…VLGK, VLVV…ERDG, MVYA…LHGN, KIYV…MAEG, VFSL…SLGG, NIVA…QAGP, and LFVIGGVAQGPSQAVEALCLRDGV.

It is found in the cytoplasm. The protein localises to the midbody. Its function is as follows. Involved in pinching off the separated nuclei at the cleavage furrow and in cytokinesis. Required for mitotic integrity and maintenance of chromosomal stability. Protects cells against mitotic errors, centrosomal amplification, micronucleus formation and aneuploidy. Plays a key role of midbody function involving abscission of the daughter cells during cytokinesis and appropriate chromosomal and nuclear segregation into the daughter cells. The sequence is that of Kelch domain-containing protein 8B (Klhdc8b) from Mus musculus (Mouse).